The chain runs to 336 residues: Phenylalanine--tRNA ligase alpha subunit (336 aa).

Glutamate 259 serves as a coordination point for Mg(2+).

The protein belongs to the class-II aminoacyl-tRNA synthetase family. Phe-tRNA synthetase alpha subunit type 1 subfamily. In terms of assembly, tetramer of two alpha and two beta subunits. Mg(2+) serves as cofactor.

Its subcellular location is the cytoplasm. The catalysed reaction is tRNA(Phe) + L-phenylalanine + ATP = L-phenylalanyl-tRNA(Phe) + AMP + diphosphate + H(+). The sequence is that of Phenylalanine--tRNA ligase alpha subunit from Tropheryma whipplei (strain TW08/27) (Whipple's bacillus).